The sequence spans 178 residues: MLSASPPAQATVRMLGIDPGLRFTGWGVIEATGNRLRHIADGVIATDSTESVPARLRVLHDTLTSLLVTYHPDEAAVEETYVNRNGTATLKLGYARGVALLAPALRNVPVAEYGAKAVKLAVVGTGGATKDQVQMMVQRLLPGATLKRADAADALAVAICHAHHRASRSAWARGAVMA.

Active-site residues include D18, E78, and D150. Mg(2+) is bound by residues D18, E78, and D150.

It belongs to the RuvC family. In terms of assembly, homodimer which binds Holliday junction (HJ) DNA. The HJ becomes 2-fold symmetrical on binding to RuvC with unstacked arms; it has a different conformation from HJ DNA in complex with RuvA. In the full resolvosome a probable DNA-RuvA(4)-RuvB(12)-RuvC(2) complex forms which resolves the HJ. Mg(2+) is required as a cofactor.

The protein localises to the cytoplasm. The catalysed reaction is Endonucleolytic cleavage at a junction such as a reciprocal single-stranded crossover between two homologous DNA duplexes (Holliday junction).. In terms of biological role, the RuvA-RuvB-RuvC complex processes Holliday junction (HJ) DNA during genetic recombination and DNA repair. Endonuclease that resolves HJ intermediates. Cleaves cruciform DNA by making single-stranded nicks across the HJ at symmetrical positions within the homologous arms, yielding a 5'-phosphate and a 3'-hydroxyl group; requires a central core of homology in the junction. The consensus cleavage sequence is 5'-(A/T)TT(C/G)-3'. Cleavage occurs on the 3'-side of the TT dinucleotide at the point of strand exchange. HJ branch migration catalyzed by RuvA-RuvB allows RuvC to scan DNA until it finds its consensus sequence, where it cleaves and resolves the cruciform DNA. This chain is Crossover junction endodeoxyribonuclease RuvC, found in Granulibacter bethesdensis (strain ATCC BAA-1260 / CGDNIH1).